The sequence spans 627 residues: ATP-dependent zinc metalloprotease FtsH 2 (627 aa).

At 1–7 the chain is on the cytoplasmic side; that stretch reads MKFSWRT. The helical transmembrane segment at 8 to 28 threads the bilayer; that stretch reads ALLWSLPLLVVGFFFWQGSFG. Residues 29 to 117 lie on the Lumenal side of the membrane; the sequence is GADANLGSNT…SHPVRNNGMV (89 aa). A helical transmembrane segment spans residues 118–138; the sequence is WGFVGNLIFPVLLIASLFFLF. The Cytoplasmic segment spans residues 139–627; that stretch reads RRSSNMPGGP…PVKEQLIPQL (489 aa). 212 to 219 contributes to the ATP binding site; the sequence is GPPGTGKT. Position 433 (His-433) interacts with Zn(2+). Residue Glu-434 is part of the active site. Zn(2+) is bound by residues His-437 and Asp-511.

The protein in the central section; belongs to the AAA ATPase family. This sequence in the C-terminal section; belongs to the peptidase M41 family. In terms of assembly, homohexamer (Potential). Part of a large (&gt;500 kDa) complex that includes FtsH3 and PSII. Coimmunoprecipitates with YidC. Zn(2+) serves as cofactor.

It localises to the cellular thylakoid membrane. In terms of biological role, acts as a processive, ATP-dependent zinc metallopeptidase for both cytoplasmic and membrane proteins. Plays a role in the quality control of integral membrane proteins. Functionally, plays a role in the selective replacement of photosystem II (PSII) protein D1 in the PSII repair cycle following visible-light and UV-B induced damage. If damaged D1 is not removed then new D1 cannot be inserted to restore the PSII reaction center. Seems to also degrade damaged and/or unassembled PSII proteins D2 and PsbB (CP47). May recognize D1 via its first 20 amino acids, as deletion of these prevents the PSII repair cycle. Also seems to degrade cytoplasmic GGPS, glucosylglycerol-phosphate synthase. The polypeptide is ATP-dependent zinc metalloprotease FtsH 2 (ftsH2) (Synechocystis sp. (strain ATCC 27184 / PCC 6803 / Kazusa)).